The chain runs to 90 residues: Probable small nuclear ribonucleoprotein E (90 aa).

The Sm domain occupies 14-89 (VNLIFRYLQN…ITLIHAAQQE (76 aa)).

This sequence belongs to the snRNP Sm proteins family. Core component of the spliceosomal U1, U2, U4 and U5 small nuclear ribonucleoproteins (snRNPs), the building blocks of the spliceosome.

The protein localises to the nucleus. Its subcellular location is the cytoplasm. It is found in the cytosol. In terms of biological role, plays a role in pre-mRNA splicing as a core component of the spliceosomal U1, U2, U4 and U5 small nuclear ribonucleoproteins (snRNPs), the building blocks of the spliceosome. This chain is Probable small nuclear ribonucleoprotein E (snr-6), found in Caenorhabditis elegans.